A 208-amino-acid polypeptide reads, in one-letter code: Small ribosomal subunit protein eS8 (208 aa).

A disordered region spans residues 1–37 (MGISRDNWHKRRKTGGKRKPYHKKRKYEPGRPAANTK). Basic residues predominate over residues 8–26 (WHKRRKTGGKRKPYHKKRK).

It belongs to the eukaryotic ribosomal protein eS8 family. Component of the small ribosomal subunit. Identified in a IGF2BP1-dependent mRNP granule complex containing untranslated mRNAs. Part of the small subunit (SSU) processome, composed of more than 70 proteins and the RNA chaperone small nucleolar RNA (snoRNA) U3.

It is found in the cytoplasm. The protein resides in the membrane. Its subcellular location is the nucleus. The protein localises to the nucleolus. Its function is as follows. Component of the small ribosomal subunit. The ribosome is a large ribonucleoprotein complex responsible for the synthesis of proteins in the cell. Part of the small subunit (SSU) processome, first precursor of the small eukaryotic ribosomal subunit. During the assembly of the SSU processome in the nucleolus, many ribosome biogenesis factors, an RNA chaperone and ribosomal proteins associate with the nascent pre-rRNA and work in concert to generate RNA folding, modifications, rearrangements and cleavage as well as targeted degradation of pre-ribosomal RNA by the RNA exosome. This chain is Small ribosomal subunit protein eS8 (rps8), found in Xenopus laevis (African clawed frog).